The chain runs to 1940 residues: Myosin-1B (1940 aa).

Residues 33–82 enclose the Myosin N-terminal SH3-like domain; it reads DAKSSVFVVHAKESYVKSTIQSKESGKVTVKTEGGETLTVKEDQIFSMNP. The Myosin motor domain occupies 86 to 783; that stretch reads DKIEDMAMMT…LLGLLEEMRD (698 aa). Lys130 carries the post-translational modification N6,N6,N6-trimethyllysine. 179 to 186 is a binding site for ATP; sequence GESGAGKT. Actin-binding regions lie at residues 660-682 and 762-776; these read LNKL…IPNE and KFGH…GLLG. Positions 786 to 815 constitute an IQ domain; the sequence is LAQLITRTQARCRGFLMRVEFKKMMERRES. Residues 844–1940 adopt a coiled-coil conformation; that stretch reads LLKSAESEKE…EIGKKAESEE (1097 aa). The tract at residues 1912–1940 is disordered; sequence EERADIAESQVNKLRAKSREIGKKAESEE. Positions 1928 to 1940 are enriched in basic and acidic residues; sequence KSREIGKKAESEE.

This sequence belongs to the TRAFAC class myosin-kinesin ATPase superfamily. Myosin family. As to quaternary structure, muscle myosin is a hexameric protein that consists of 2 heavy chain subunits (MHC), 2 alkali light chain subunits (MLC) and 2 regulatory light chain subunits (MLC-2).

The protein localises to the cytoplasm. It localises to the myofibril. Muscle contraction. In Gallus gallus (Chicken), this protein is Myosin-1B (MYH1B).